Consider the following 139-residue polypeptide: Large ribosomal subunit protein eL32 (139 aa).

The protein belongs to the eukaryotic ribosomal protein eL32 family.

The chain is Large ribosomal subunit protein eL32 (RPL32) from Encephalitozoon cuniculi (strain GB-M1) (Microsporidian parasite).